The sequence spans 239 residues: 2-C-methyl-D-erythritol 4-phosphate cytidylyltransferase (239 aa).

Belongs to the IspD/TarI cytidylyltransferase family. IspD subfamily.

The catalysed reaction is 2-C-methyl-D-erythritol 4-phosphate + CTP + H(+) = 4-CDP-2-C-methyl-D-erythritol + diphosphate. It functions in the pathway isoprenoid biosynthesis; isopentenyl diphosphate biosynthesis via DXP pathway; isopentenyl diphosphate from 1-deoxy-D-xylulose 5-phosphate: step 2/6. Catalyzes the formation of 4-diphosphocytidyl-2-C-methyl-D-erythritol from CTP and 2-C-methyl-D-erythritol 4-phosphate (MEP). In Acinetobacter baylyi (strain ATCC 33305 / BD413 / ADP1), this protein is 2-C-methyl-D-erythritol 4-phosphate cytidylyltransferase.